Reading from the N-terminus, the 205-residue chain is High frequency lysogenization protein HflD homolog (205 aa).

Belongs to the HflD family.

Its subcellular location is the cytoplasm. The protein localises to the cell inner membrane. This chain is High frequency lysogenization protein HflD homolog, found in Vibrio atlanticus (strain LGP32) (Vibrio splendidus (strain Mel32)).